A 471-amino-acid chain; its full sequence is Siroheme synthase (471 aa).

The tract at residues 1 to 203 is precorrin-2 dehydrogenase /sirohydrochlorin ferrochelatase; the sequence is MDYLPLFADI…GDWESAEKTL (203 aa). NAD(+)-binding positions include 22 to 23 and 43 to 44; these read EV and KN. Residue S128 is modified to Phosphoserine. The segment at 215 to 471 is uroporphyrinogen-III C-methyltransferase; that stretch reads GEIILVGAGP…DTKSSLINLA (257 aa). Residue P224 coordinates S-adenosyl-L-methionine. D247 functions as the Proton acceptor in the catalytic mechanism. K269 serves as the catalytic Proton donor. S-adenosyl-L-methionine contacts are provided by residues 300-302, I305, 330-331, M382, and A411; these read GGD and TA.

It in the N-terminal section; belongs to the precorrin-2 dehydrogenase / sirohydrochlorin ferrochelatase family. The protein in the C-terminal section; belongs to the precorrin methyltransferase family.

The catalysed reaction is uroporphyrinogen III + 2 S-adenosyl-L-methionine = precorrin-2 + 2 S-adenosyl-L-homocysteine + H(+). It catalyses the reaction precorrin-2 + NAD(+) = sirohydrochlorin + NADH + 2 H(+). It carries out the reaction siroheme + 2 H(+) = sirohydrochlorin + Fe(2+). It functions in the pathway cofactor biosynthesis; adenosylcobalamin biosynthesis; precorrin-2 from uroporphyrinogen III: step 1/1. It participates in cofactor biosynthesis; adenosylcobalamin biosynthesis; sirohydrochlorin from precorrin-2: step 1/1. The protein operates within porphyrin-containing compound metabolism; siroheme biosynthesis; precorrin-2 from uroporphyrinogen III: step 1/1. Its pathway is porphyrin-containing compound metabolism; siroheme biosynthesis; siroheme from sirohydrochlorin: step 1/1. It functions in the pathway porphyrin-containing compound metabolism; siroheme biosynthesis; sirohydrochlorin from precorrin-2: step 1/1. Its function is as follows. Multifunctional enzyme that catalyzes the SAM-dependent methylations of uroporphyrinogen III at position C-2 and C-7 to form precorrin-2 via precorrin-1. Then it catalyzes the NAD-dependent ring dehydrogenation of precorrin-2 to yield sirohydrochlorin. Finally, it catalyzes the ferrochelation of sirohydrochlorin to yield siroheme. The chain is Siroheme synthase from Zymomonas mobilis subsp. mobilis (strain ATCC 31821 / ZM4 / CP4).